Reading from the N-terminus, the 425-residue chain is Kynureninase (425 aa).

Pyridoxal 5'-phosphate-binding positions include Leu-105, Thr-106, Phe-133 to Asp-136, Asp-218, His-221, and Tyr-243. Residue Lys-244 is modified to N6-(pyridoxal phosphate)lysine. Pyridoxal 5'-phosphate-binding residues include Trp-274 and Asn-302.

It belongs to the kynureninase family. Homodimer. It depends on pyridoxal 5'-phosphate as a cofactor.

The enzyme catalyses L-kynurenine + H2O = anthranilate + L-alanine + H(+). It carries out the reaction 3-hydroxy-L-kynurenine + H2O = 3-hydroxyanthranilate + L-alanine + H(+). Its pathway is amino-acid degradation; L-kynurenine degradation; L-alanine and anthranilate from L-kynurenine: step 1/1. It functions in the pathway cofactor biosynthesis; NAD(+) biosynthesis; quinolinate from L-kynurenine: step 2/3. Catalyzes the cleavage of L-kynurenine (L-Kyn) and L-3-hydroxykynurenine (L-3OHKyn) into anthranilic acid (AA) and 3-hydroxyanthranilic acid (3-OHAA), respectively. This Flavobacterium psychrophilum (strain ATCC 49511 / DSM 21280 / CIP 103535 / JIP02/86) protein is Kynureninase.